The primary structure comprises 405 residues: MIIKPKVRGFICTTTHPLGCERNVAEQIATTRANIPESERDKGPKNVLVIGASSGYGLAARVTAAFGYGASTLGVFFEKPGTEKKPGTAGWYNAAAFDKFAKAEGLYSKAINGDAFSHEAREKAIELIKQDMGQIDLVVYSLASPVRKLPDSGELKRSALKPIGETYTATAIDTNKDAIVEASVEPATEEEIADTVTVMGGEDWELWVDALDKAGVLAPGARSVAFSYIGTEITWPIYWHGALGKAKEDLDRAAGELDARLGQHGGGANVAVLKSVVTQASAAIPVMPLYISMVYKVMKEQGLHEGTIDQLNRLYRERLYSTQGQNGELATDEAGRLRLDDWELRDDVQQACQDLWPQVTTENLFTLTDYAGYKREFLKLFGFERDDVDYEADVDPVAEFDVVQL.

NAD(+) contacts are provided by residues 51–56 (GASSGY), 77–78 (FE), 114–115 (DA), and 142–143 (LA). Tyr-228 provides a ligand contact to substrate. Tyr-238 functions as the Proton donor in the catalytic mechanism. NAD(+)-binding positions include Lys-247 and 276-278 (VVT).

Belongs to the TER reductase family. As to quaternary structure, monomer.

It carries out the reaction a 2,3-saturated acyl-[ACP] + NAD(+) = a (2E)-enoyl-[ACP] + NADH + H(+). It functions in the pathway lipid metabolism; fatty acid biosynthesis. Its function is as follows. Involved in the final reduction of the elongation cycle of fatty acid synthesis (FAS II). Catalyzes the reduction of a carbon-carbon double bond in an enoyl moiety that is covalently linked to an acyl carrier protein (ACP). In Chromohalobacter salexigens (strain ATCC BAA-138 / DSM 3043 / CIP 106854 / NCIMB 13768 / 1H11), this protein is Enoyl-[acyl-carrier-protein] reductase [NADH].